The sequence spans 395 residues: Lipid-A-disaccharide synthase (395 aa).

The protein belongs to the LpxB family.

It catalyses the reaction a lipid X + a UDP-2-N,3-O-bis[(3R)-3-hydroxyacyl]-alpha-D-glucosamine = a lipid A disaccharide + UDP + H(+). It functions in the pathway bacterial outer membrane biogenesis; LPS lipid A biosynthesis. In terms of biological role, condensation of UDP-2,3-diacylglucosamine and 2,3-diacylglucosamine-1-phosphate to form lipid A disaccharide, a precursor of lipid A, a phosphorylated glycolipid that anchors the lipopolysaccharide to the outer membrane of the cell. This is Lipid-A-disaccharide synthase from Bordetella avium (strain 197N).